Consider the following 348-residue polypeptide: Olfactory receptor 2T4 (348 aa).

At 1–57 (MDNITWMASHTGWSDFILMGLFRQSKHPMANITWMANHTGWSDFILLGLFRQSKHPA) the chain is on the extracellular side. Residues asparagine 31 and asparagine 37 are each glycosylated (N-linked (GlcNAc...) asparagine). The chain crosses the membrane as a helical span at residues 58–81 (LLCVVIFVVFLMALSGNAVLILLI). The Cytoplasmic portion of the chain corresponds to 82 to 89 (HCDAHLHT). The helical transmembrane segment at 90–111 (PMYFFISQLSLMDMAYISVTVP) threads the bilayer. Residues 112–132 (KMLLDQVMGVNKISAPECGMQ) lie on the Extracellular side of the membrane. Cysteine 129 and cysteine 221 are oxidised to a cystine. Residues 133 to 152 (MFFYVTLAGSEFFLLATMAY) traverse the membrane as a helical segment. Residues 153 to 171 (DRYVAICHPLRYPVLMNHR) lie on the Cytoplasmic side of the membrane. A helical membrane pass occupies residues 172–190 (VCLFLSSGCWFLGSVDGFT). Over 191–227 (FTPITMTFPFRGSREIHHFFCEVPAVLNLSCSDTSLY) the chain is Extracellular. A glycan (N-linked (GlcNAc...) asparagine) is linked at asparagine 218. Residues 228 to 251 (EIFMYLCCVLMLLIPVVIISSSYL) form a helical membrane-spanning segment. The Cytoplasmic segment spans residues 252–268 (LILLTIHGMNSAEGRKK). Residues 269 to 291 (AFATCSSHLTVVILFYGAAIYTY) form a helical membrane-spanning segment. Residues 292-304 (MLPSSYHTPEKDM) are Extracellular-facing. Residues 305–324 (MVSVFYTILTPVVNPLIYSL) form a helical membrane-spanning segment. The Cytoplasmic portion of the chain corresponds to 325–348 (RNKDVMGALKKMLTVEPAFQKAME).

It belongs to the G-protein coupled receptor 1 family.

It is found in the cell membrane. Its function is as follows. Odorant receptor. The polypeptide is Olfactory receptor 2T4 (OR2T4) (Homo sapiens (Human)).